The chain runs to 147 residues: Large ribosomal subunit protein uL15 (147 aa).

Positions 1 to 62 are disordered; sequence MKLHELKPAQ…GQQPLSRRMP (62 aa). Gly residues-rich tracts occupy residues 21 to 31 and 42 to 52; these read RGIGSGTGKTS and AGGGVRPGFEG.

Belongs to the universal ribosomal protein uL15 family. As to quaternary structure, part of the 50S ribosomal subunit.

Functionally, binds to the 23S rRNA. The chain is Large ribosomal subunit protein uL15 from Desulfitobacterium hafniense (strain DSM 10664 / DCB-2).